Consider the following 303-residue polypeptide: N-acetyl-D-glucosamine kinase (303 aa).

ATP-binding positions include Gly-4 to Lys-11 and Gly-133 to Phe-140. 4 residues coordinate Zn(2+): His-157, Cys-177, Cys-179, and Cys-184.

Belongs to the ROK (NagC/XylR) family. NagK subfamily.

The catalysed reaction is N-acetyl-D-glucosamine + ATP = N-acetyl-D-glucosamine 6-phosphate + ADP + H(+). Its pathway is cell wall biogenesis; peptidoglycan recycling. Functionally, catalyzes the phosphorylation of N-acetyl-D-glucosamine (GlcNAc) derived from cell-wall degradation, yielding GlcNAc-6-P. The polypeptide is N-acetyl-D-glucosamine kinase (Escherichia coli O9:H4 (strain HS)).